Consider the following 475-residue polypeptide: Ribulose bisphosphate carboxylase large chain (475 aa).

The propeptide occupies 1-2; it reads MS. Position 3 is an N-acetylproline (Pro3). Lys14 is modified (N6,N6,N6-trimethyllysine). Substrate-binding residues include Asn123 and Thr173. Lys175 serves as the catalytic Proton acceptor. Position 177 (Lys177) interacts with substrate. The Mg(2+) site is built by Lys201, Asp203, and Glu204. Residue Lys201 is modified to N6-carboxylysine. The active-site Proton acceptor is the His294. Residues Arg295, His327, and Ser379 each contribute to the substrate site.

It belongs to the RuBisCO large chain family. Type I subfamily. In terms of assembly, heterohexadecamer of 8 large chains and 8 small chains; disulfide-linked. The disulfide link is formed within the large subunit homodimers. Requires Mg(2+) as cofactor. Post-translationally, the disulfide bond which can form in the large chain dimeric partners within the hexadecamer appears to be associated with oxidative stress and protein turnover.

It localises to the plastid. It is found in the chloroplast. It carries out the reaction 2 (2R)-3-phosphoglycerate + 2 H(+) = D-ribulose 1,5-bisphosphate + CO2 + H2O. The enzyme catalyses D-ribulose 1,5-bisphosphate + O2 = 2-phosphoglycolate + (2R)-3-phosphoglycerate + 2 H(+). Functionally, ruBisCO catalyzes two reactions: the carboxylation of D-ribulose 1,5-bisphosphate, the primary event in carbon dioxide fixation, as well as the oxidative fragmentation of the pentose substrate in the photorespiration process. Both reactions occur simultaneously and in competition at the same active site. The polypeptide is Ribulose bisphosphate carboxylase large chain (Chara vulgaris (Common stonewort)).